The sequence spans 71 residues: ALTELRCQCLQTVQGIHLKNIQNLKVLSPGPHCAQTEVIATLKSGQEACRNPAAPMVKKFLQKRLSNGNSS.

2 disulfides stabilise this stretch: C7/C33 and C9/C49.

This sequence belongs to the intercrine alpha (chemokine CxC) family. In terms of assembly, homodimer.

The protein resides in the secreted. Functionally, has chemotactic activity for neutrophils. This Oryctolagus cuniculus (Rabbit) protein is Permeability factor 2.